Consider the following 191-residue polypeptide: Corticoliberin (191 aa).

The N-terminal stretch at 1-24 (MRLPLLVSAGVLLVALLPCPPCRA) is a signal peptide. A propeptide spanning residues 25-148 (LLSRGPVLGA…RQEAPERERR (124 aa)) is cleaved from the precursor. The disordered stretch occupies residues 115-153 (PLPRRPLDSPSGPAERGAENALSSRQEAPERERRSEEPP). Basic and acidic residues predominate over residues 141–151 (EAPERERRSEE). Position 189 is an isoleucine amide (Ile-189).

The protein belongs to the sauvagine/corticotropin-releasing factor/urotensin I family. As to quaternary structure, interacts (via C-terminus) with CRFR1 (via N-terminal extracellular domain). In terms of tissue distribution, produced by the hypothalamus.

The protein localises to the secreted. Hormone regulating the release of corticotropin from pituitary gland. Induces NLRP6 in intestinal epithelial cells, hence may influence gut microbiota profile. The protein is Corticoliberin (CRH) of Sus scrofa (Pig).